The chain runs to 227 residues: MLRILDRAEEVLIAALIATATVLIFVSVTHRFTLGFVADFVGFFRGHGMTGAAAAAKSLYTTLRGINLVWAQELCIILFVWMAKFGAAYGVRTGIHVGIDVLINRLDAPKRRFFILLGLGAGALFTGIIATLGANFVLHMYHASSTSPDLELPMWLVYLAIPMGSSLMCFRFLQVAFGFARTGELPHHDHGHVDGVDTENEGIDAEGDVLLHSPLTPRDLVEKPKDN.

Residues 1-7 (MLRILDR) are Cytoplasmic-facing. The chain crosses the membrane as a helical span at residues 8–28 (AEEVLIAALIATATVLIFVSV). The Periplasmic segment spans residues 29–67 (THRFTLGFVADFVGFFRGHGMTGAAAAAKSLYTTLRGIN). Residues 68-88 (LVWAQELCIILFVWMAKFGAA) form a helical membrane-spanning segment. Residues 89 to 112 (YGVRTGIHVGIDVLINRLDAPKRR) lie on the Cytoplasmic side of the membrane. Residues 113 to 133 (FFILLGLGAGALFTGIIATLG) form a helical membrane-spanning segment. The Periplasmic portion of the chain corresponds to 134–149 (ANFVLHMYHASSTSPD). The chain crosses the membrane as a helical span at residues 150–170 (LELPMWLVYLAIPMGSSLMCF). The Cytoplasmic segment spans residues 171-227 (RFLQVAFGFARTGELPHHDHGHVDGVDTENEGIDAEGDVLLHSPLTPRDLVEKPKDN).

The protein belongs to the TRAP transporter small permease family. In terms of assembly, the complex comprises the extracytoplasmic solute receptor protein DctP, and the two transmembrane proteins DctQ and DctM.

It is found in the cell inner membrane. Its function is as follows. Part of the tripartite ATP-independent periplasmic (TRAP) transport system DctPQM involved in C4-dicarboxylates uptake. The chain is C4-dicarboxylate TRAP transporter small permease protein DctQ from Rhodobacter capsulatus (Rhodopseudomonas capsulata).